The following is a 102-amino-acid chain: NADH-quinone oxidoreductase subunit K (102 aa).

Transmembrane regions (helical) follow at residues 6–26, 30–50, and 62–82; these read LEHGLAVAGVLFCLGLVGLMV, ILFVLMSLEIMMNAAALAFVV, and VMFILVISLAAAEASIGLAIL.

Belongs to the complex I subunit 4L family. NDH-1 is composed of 13 different subunits. Subunits NuoA, H, J, K, L, M, N constitute the membrane sector of the complex.

The protein localises to the cell inner membrane. The enzyme catalyses a quinone + NADH + 5 H(+)(in) = a quinol + NAD(+) + 4 H(+)(out). In terms of biological role, NDH-1 shuttles electrons from NADH, via FMN and iron-sulfur (Fe-S) centers, to quinones in the respiratory chain. The immediate electron acceptor for the enzyme in this species is believed to be ubiquinone. Couples the redox reaction to proton translocation (for every two electrons transferred, four hydrogen ions are translocated across the cytoplasmic membrane), and thus conserves the redox energy in a proton gradient. The chain is NADH-quinone oxidoreductase subunit K from Pseudomonas syringae pv. syringae (strain B728a).